Reading from the N-terminus, the 115-residue chain is MEKMLLKSTTRHVRIFTAEVVDEELKFHPNKLTLDLDPDNEFIWNEDSLNKINEKFNELIKERAGKDLDDYELRKIGSEIEGLIKFLLQNGQLSYNPDCRVMNYSMGLPKTNEVL.

The protein belongs to the complex I NdhM subunit family. In terms of assembly, NDH-1 can be composed of about 15 different subunits; different subcomplexes with different compositions have been identified which probably have different functions.

The protein localises to the cellular thylakoid membrane. The catalysed reaction is a plastoquinone + NADH + (n+1) H(+)(in) = a plastoquinol + NAD(+) + n H(+)(out). It catalyses the reaction a plastoquinone + NADPH + (n+1) H(+)(in) = a plastoquinol + NADP(+) + n H(+)(out). NDH-1 shuttles electrons from an unknown electron donor, via FMN and iron-sulfur (Fe-S) centers, to quinones in the respiratory and/or the photosynthetic chain. The immediate electron acceptor for the enzyme in this species is believed to be plastoquinone. Couples the redox reaction to proton translocation, and thus conserves the redox energy in a proton gradient. Cyanobacterial NDH-1 also plays a role in inorganic carbon-concentration. The chain is NAD(P)H-quinone oxidoreductase subunit M from Prochlorococcus marinus (strain AS9601).